The following is a 376-amino-acid chain: Nuclear egress protein 1 (376 aa).

S19 bears the Phosphoserine mark. The segment at 22-57 (RKRRQRELASKVASTVNGATSANNHGEPPSPADARP) is disordered. A compositionally biased stretch (polar residues) spans 33 to 45 (VASTVNGATSANN). Residues 106–211 (CLDISPYGNE…HVIFENPDVH (106 aa)) form a CCCH-type zinc finger. The interval 316–376 (VVSTNGCGPS…PLFLNSIRAP (61 aa)) is disordered. Positions 317-332 (VSTNGCGPSSSSQSTP) are enriched in polar residues.

Belongs to the herpesviridae NEC1 protein family. As to quaternary structure, forms a heterohexameric complex with NEC2. Interacts with capsid vertex specific component 2/CVC2; this interaction directs the capsid to the host inner nuclear membrane to initiate budding. Post-translationally, phosphorylated at serine residues in the N-terminus. This phosphorylation regulates the localization within the inner nuclear membrane. Phosphorylation by viral kinase UL97 at Ser-19 plays an important role for correct viral nuclear egress complex (NEC) localization.

It localises to the host nucleus inner membrane. Functionally, plays an essential role in virion nuclear egress, the first step of virion release from infected cell. Within the host nucleus, NEC1 interacts with the newly formed capsid through the vertexes and directs it to the inner nuclear membrane by associating with NEC2. Induces the budding of the capsid at the inner nuclear membrane as well as its envelopment into the perinuclear space. There, the NEC1/NEC2 complex promotes the fusion of the enveloped capsid with the outer nuclear membrane and the subsequent release of the viral capsid into the cytoplasm where it will reach the secondary budding sites in the host Golgi or trans-Golgi network. The protein is Nuclear egress protein 1 of Homo sapiens (Human).